The primary structure comprises 321 residues: MSFTPKNLNVKYTFNVSRNRSKVWLISGFAVLISFLGFFFSWTNQSIGFPLRPGFDFTGGTQIILERKCDSECNKITTINISEAFNNAKFSNQETSQKLFDARIQFLDGYKSLLIRSPELSPSESKEVIESIEFVAGPLEDGGQSVESIGPTLGAKLLQTTLISLLVAFSCVAIYISIRFDRMFSLYALLALFHDVLIVCGVFSWLGIINEVEVNSLFAVALLTIAGYSVNDTVVVFDRIREINKQESRMNFKQKVDFAVSATLTRTLYTSGTTLLPLIALIFFGGTTLYWFAIALALGVVVGSWSSIALVPSLLTLRKEN.

The next 6 membrane-spanning stretches (helical) occupy residues 23 to 43 (VWLI…FSWT), 158 to 178 (LQTT…YISI), 189 to 209 (LLAL…LGII), 217 to 237 (LFAV…VVVF), 258 to 280 (FAVS…PLIA), and 290 to 312 (YWFA…ALVP).

The protein belongs to the SecD/SecF family. SecF subfamily. Forms a complex with SecD. Part of the essential Sec protein translocation apparatus which comprises SecA, SecYEG and auxiliary proteins SecDF. Other proteins may also be involved.

It localises to the cell inner membrane. In terms of biological role, part of the Sec protein translocase complex. Interacts with the SecYEG preprotein conducting channel. SecDF uses the proton motive force (PMF) to complete protein translocation after the ATP-dependent function of SecA. Functionally, probably participates in protein translocation into and across both the cytoplasmic and thylakoid membranes in cyanobacterial cells. This is Protein translocase subunit SecF from Prochlorococcus marinus (strain SARG / CCMP1375 / SS120).